The sequence spans 426 residues: Tol-Pal system protein TolB (426 aa).

The N-terminal stretch at 1-25 (MNILLSRFRLLLAAALAALSWGAQA) is a signal peptide.

The protein belongs to the TolB family. In terms of assembly, the Tol-Pal system is composed of five core proteins: the inner membrane proteins TolA, TolQ and TolR, the periplasmic protein TolB and the outer membrane protein Pal. They form a network linking the inner and outer membranes and the peptidoglycan layer.

It localises to the periplasm. Functionally, part of the Tol-Pal system, which plays a role in outer membrane invagination during cell division and is important for maintaining outer membrane integrity. The protein is Tol-Pal system protein TolB of Aromatoleum aromaticum (strain DSM 19018 / LMG 30748 / EbN1) (Azoarcus sp. (strain EbN1)).